A 241-amino-acid polypeptide reads, in one-letter code: Proteasome subunit alpha type-5 (241 aa).

At M1 the chain carries N-acetylmethionine. Residue S16 is modified to Phosphoserine. The residue at position 55 (T55) is a Phosphothreonine. Residues S56 and S63 each carry the phosphoserine modification. The O-linked (GlcNAc) serine glycan is linked to S198.

The protein belongs to the peptidase T1A family. The 26S proteasome consists of a 20S proteasome core and two 19S regulatory subunits. The 20S proteasome core is a barrel-shaped complex made of 28 subunits that are arranged in four stacked rings. The two outer rings are each formed by seven alpha subunits, and the two inner rings are formed by seven beta subunits. The proteolytic activity is exerted by three beta-subunits PSMB5, PSMB6 and PSMB7. PSMA5 interacts directly with the PSMG1-PSMG2 heterodimer which promotes 20S proteasome assembly.

Its subcellular location is the cytoplasm. It is found in the nucleus. Its function is as follows. Component of the 20S core proteasome complex involved in the proteolytic degradation of most intracellular proteins. This complex plays numerous essential roles within the cell by associating with different regulatory particles. Associated with two 19S regulatory particles, forms the 26S proteasome and thus participates in the ATP-dependent degradation of ubiquitinated proteins. The 26S proteasome plays a key role in the maintenance of protein homeostasis by removing misfolded or damaged proteins that could impair cellular functions, and by removing proteins whose functions are no longer required. Associated with the PA200 or PA28, the 20S proteasome mediates ubiquitin-independent protein degradation. This type of proteolysis is required in several pathways including spermatogenesis (20S-PA200 complex) or generation of a subset of MHC class I-presented antigenic peptides (20S-PA28 complex). The sequence is that of Proteasome subunit alpha type-5 (PSMA5) from Bos taurus (Bovine).